The primary structure comprises 177 residues: Preprotein translocase subunit SECE1 (177 aa).

A chloroplast-targeting transit peptide spans 1 to 38 (MSLTAQFSPPVTGITRSLRDTKPSLSNLRVFPVYTEIR). The segment at 60-87 (RDTAGSESESEATPSPAEESGSGEDKEV) is disordered. Positions 64–79 (GSESESEATPSPAEES) are enriched in low complexity. A helical membrane pass occupies residues 140–160 (VVLGVIAGSSVVLLTVNFLLA).

This sequence belongs to the SecE/SEC61-gamma family. Part of the Sec protein translocation apparatus. Interacts with SCY1 and ALB3.

The protein localises to the plastid. It is found in the chloroplast thylakoid membrane. Its function is as follows. Involved in the import/insertion pathway in the thylakoids. The signal recognition particle is not involved in the insertion of SECE1 in the thylakoid membrane. This chain is Preprotein translocase subunit SECE1 (SECE1), found in Arabidopsis thaliana (Mouse-ear cress).